The chain runs to 375 residues: MAPDIDNIWSSTTDAAESPVDERRILLKRAVGQKILVPSILSLMPAWPSQVHPAVDEVNTEIDKWLPTVNVAEKKKAKHRARGNYAFLTAVYYPYCKETERLVVIAKFLYWIFFWDDEIDTGGELTEDEEGTIQCCEETNKCVDDCLGPNPNYNPPPNSRGTVEMFYPILRDFRAGLGPVSTERLRLELHDYINGVAKQQKVRQGERLPDPWYHFKIRSDDVGVIPSITQNEYAMKFELPEYVRRHEAMEEIVQECTKLTVLLNDVLSLQKEFRDSQLENLVLLFMNRYNLSLQAAVDKVLDLIREHYAICVAAEKRLPWSEDDEKLNDDIREYVRGCQRLATGTAYWSYSCERYFKQTQVNDKWEVLLDLSYVE.

Residues Asp-116, Asn-264, and Ser-268 each contribute to the Mg(2+) site. Residues 116 to 120 carry the D(D/E)XX(D/E) motif motif; the sequence is DDEID. An NSE motif motif is present at residues 264–272; it reads NDVLSLQKE. The WxxxxxRY motif motif lies at 348-355; that stretch reads WSYSCERY. Residues Arg-354 and Tyr-355 each contribute to the (2E,6E)-farnesyl diphosphate site.

It belongs to the terpene synthase family. In terms of assembly, homodimer. Requires Mg(2+) as cofactor.

It carries out the reaction (2E,6E)-farnesyl diphosphate + H2O = trichobrasilenol + diphosphate. Its pathway is secondary metabolite biosynthesis. Functionally, terpene cyclase; part of the gene cluster that mediates the biosynthesis of the brasilane terpene glycosides brasilane D and E. The biosynthesis starts with the activity of the terpene cyclase braA that converts farnesyl pyrophosphate into the sesquiterpene alcohol trichobrasilenol. Subsequently, trichobrasilenol is glycosylated by the O-glycosyltransferase braB putatively using UDP-GlcNAc as sugar donor to yield brasilane A. The latter then undergoes two rounds of oxidation performed by the cytochrome P450 monooxygenase braC. In the first round braC hydroxylates C-12 forming brasilane D, which serves as substrate in the second round to establish the epoxide at the bond between C-5 and C-10 and oxidize the alcohol at C-12 to an aldehyde leading to the final product brasilane E. In Annulohypoxylon truncatum (Hypoxylon truncatum), this protein is Terpene cyclase braA.